The sequence spans 106 residues: uncharacterized protein (106 aa).

The tract at residues 1–23 (MASGAPPLTQKTPSHARRKERRR) is disordered. Residues 14–23 (SHARRKERRR) show a composition bias toward basic residues.

This is an uncharacterized protein from Treponema pallidum (strain Nichols).